A 367-amino-acid polypeptide reads, in one-letter code: Oleoyl-acyl carrier protein thioesterase 2, chloroplastic (367 aa).

A chloroplast-targeting transit peptide spans 1-48 (MLKLSCNVTDHIHNLFSNSRRIFVPVHRQTRPISCFQLKKEPLRAILS). Active-site residues include Asn-263, His-265, and Cys-300.

It belongs to the acyl-ACP thioesterase family.

The protein localises to the plastid. Its subcellular location is the chloroplast. The enzyme catalyses (9Z)-octadecenoyl-[ACP] + H2O = (9Z)-octadecenoate + holo-[ACP] + H(+). Functionally, plays an essential role in chain termination during de novo fatty acid synthesis. Possesses high thioesterase activity for oleoyl-ACP versus other acyl-ACPs. The protein is Oleoyl-acyl carrier protein thioesterase 2, chloroplastic (FATA2) of Arabidopsis thaliana (Mouse-ear cress).